We begin with the raw amino-acid sequence, 987 residues long: MNKTVVRCLLSRSHHPLIHFSTNLSLLHRVFTCSRYLTARFMSTPPPDDMFGFDDPFSPSDSREVVDLTKEYSFLHDSLVDYGNVNVHQVVPIITQSSIDARAIADAVSGVDDVFGRKSQKFLRQFREKLSESLVIEVLRLIARPSAVISFFVWAGRQIGYKHTAPVYNALVDLIVRDDDEKVPEEFLQQIRDDDKEVFGEFLNVLVRKHCRNGSFSIALEELGRLKDFRFRPSRSTYNCLIQAFLKADRLDSASLIHREMSLANLRMDGFTLRCFAYSLCKVGKWREALTLVETENFVPDTVFYTKLISGLCEASLFEEAMDFLNRMRATSCLPNVVTYSTLLCGCLNKKQLGRCKRVLNMMMMEGCYPSPKIFNSLVHAYCTSGDHSYAYKLLKKMVKCGHMPGYVVYNILIGSICGDKDSLNCDLLDLAEKAYSEMLAAGVVLNKINVSSFTRCLCSAGKYEKAFSVIREMIGQGFIPDTSTYSKVLNYLCNASKMELAFLLFEEMKRGGLVADVYTYTIMVDSFCKAGLIEQARKWFNEMREVGCTPNVVTYTALIHAYLKAKKVSYANELFETMLSEGCLPNIVTYSALIDGHCKAGQVEKACQIFERMCGSKDVPDVDMYFKQYDDNSERPNVVTYGALLDGFCKSHRVEEARKLLDAMSMEGCEPNQIVYDALIDGLCKVGKLDEAQEVKTEMSEHGFPATLYTYSSLIDRYFKVKRQDLASKVLSKMLENSCAPNVVIYTEMIDGLCKVGKTDEAYKLMQMMEEKGCQPNVVTYTAMIDGFGMIGKIETCLELLERMGSKGVAPNYVTYRVLIDHCCKNGALDVAHNLLEEMKQTHWPTHTAGYRKVIEGFNKEFIESLGLLDEIGQDDTAPFLSVYRLLIDNLIKAQRLEMALRLLEEVATFSATLVDYSSTYNSLIESLCLANKVETAFQLFSEMTKKGVIPEMQSFCSLIKGLFRNSKISEALLLLDFISHMVCPL.

Residues 1–42 constitute a mitochondrion transit peptide; sequence MNKTVVRCLLSRSHHPLIHFSTNLSLLHRVFTCSRYLTARFM. PPR repeat units follow at residues 164–198, 199–233, 234–268, 269–299, 301–335, 336–370, 371–405, 406–446, 447–481, 482–516, 517–551, 552–586, 587–621, 638–672, 673–707, 708–742, 743–777, 778–812, 813–847, 881–915, 918–952, and 953–987; these read TAPV…DKEV, FGEF…RFRP, SRST…NLRM, DGFT…ENFV, DTVF…SCLP, NVVT…GCYP, SPKI…GHMP, GYVV…GVVL, NKIN…GFIP, DTST…GLVA, DVYT…GCTP, NVVT…GCLP, NIVT…KDVP, NVVT…GCEP, NQIV…GFPA, TLYT…SCAP, NVVI…GCQP, NVVT…GVAP, NYVT…HWPT, FLSV…SATL, YSST…GVIP, and EMQS…VCPL.

It belongs to the PPR family. P subfamily.

Its subcellular location is the mitochondrion. The sequence is that of Pentatricopeptide repeat-containing protein At1g06710, mitochondrial from Arabidopsis thaliana (Mouse-ear cress).